The primary structure comprises 961 residues: Glycine dehydrogenase (decarboxylating) (961 aa).

An N6-(pyridoxal phosphate)lysine modification is found at K702.

The protein belongs to the GcvP family. The glycine cleavage system is composed of four proteins: P, T, L and H. Pyridoxal 5'-phosphate serves as cofactor.

The catalysed reaction is N(6)-[(R)-lipoyl]-L-lysyl-[glycine-cleavage complex H protein] + glycine + H(+) = N(6)-[(R)-S(8)-aminomethyldihydrolipoyl]-L-lysyl-[glycine-cleavage complex H protein] + CO2. Functionally, the glycine cleavage system catalyzes the degradation of glycine. The P protein binds the alpha-amino group of glycine through its pyridoxal phosphate cofactor; CO(2) is released and the remaining methylamine moiety is then transferred to the lipoamide cofactor of the H protein. The polypeptide is Glycine dehydrogenase (decarboxylating) (Rhodopseudomonas palustris (strain BisA53)).